A 300-amino-acid chain; its full sequence is E3 ubiquitin-protein ligase RNF212B (300 aa).

The segment at 6 to 40 adopts an RING-type zinc-finger fold; that stretch reads CNQCFRKDGAHFFVTSCGHIFCKKCVTLEKCAVCG. A coiled-coil region spans residues 88-124; it reads LIAFYKHRITKLETAMQETQQALVSQDKELSVLRKEN. Disordered stretches follow at residues 141-251 and 280-300; these read YQGS…HTRV and PYQQQRQMGLPSGREAWTTSR. The span at 155-169 shows a compositional bias: polar residues; the sequence is TSPSQSVTPRPSFQH. Residues 170–183 are compositionally biased toward low complexity; sequence SSQVVSRSSSVESV. The segment covering 191 to 200 has biased composition (gly residues); it reads GSLGQGGRGL. Residues 211 to 234 show a composition bias toward polar residues; sequence NETPSPASTHSLSYRPSSASSGQG.

Homodimer. Autoubiquitinated.

It localises to the chromosome. It carries out the reaction S-ubiquitinyl-[E2 ubiquitin-conjugating enzyme]-L-cysteine + [acceptor protein]-L-lysine = [E2 ubiquitin-conjugating enzyme]-L-cysteine + N(6)-ubiquitinyl-[acceptor protein]-L-lysine.. The protein operates within protein modification; protein ubiquitination. Its function is as follows. Ubiquitin E3 ligase that acts as a crucial factor for crossing-over (CO) formation during meiosis. Essential for normal prophase I progression and for ensuring appropriate CO designation in meiosis. Recruits key components of the cross-over machinery either directly ou indirectly, leading to the activation of the MutL-gamma complex. The function of RNF212B in CO designation is dependent on its catalytic activity. The sequence is that of E3 ubiquitin-protein ligase RNF212B (RNF212B) from Pongo abelii (Sumatran orangutan).